A 44-amino-acid polypeptide reads, in one-letter code: Photosystem II reaction center protein K (44 aa).

A propeptide spanning residues 1–7 is cleaved from the precursor; sequence MESLLLA. Residues 23–43 traverse the membrane as a helical segment; it reads LPIIPVFFLLLAFVWQAAIGF.

The protein belongs to the PsbK family. PSII is composed of 1 copy each of membrane proteins PsbA, PsbB, PsbC, PsbD, PsbE, PsbF, PsbH, PsbI, PsbJ, PsbK, PsbL, PsbM, PsbT, PsbX, PsbY, PsbZ, Psb30/Ycf12, at least 3 peripheral proteins of the oxygen-evolving complex and a large number of cofactors. It forms dimeric complexes.

It localises to the plastid. The protein localises to the chloroplast thylakoid membrane. Functionally, one of the components of the core complex of photosystem II (PSII). PSII is a light-driven water:plastoquinone oxidoreductase that uses light energy to abstract electrons from H(2)O, generating O(2) and a proton gradient subsequently used for ATP formation. It consists of a core antenna complex that captures photons, and an electron transfer chain that converts photonic excitation into a charge separation. The sequence is that of Photosystem II reaction center protein K from Trieres chinensis (Marine centric diatom).